A 233-amino-acid chain; its full sequence is Glyceraldehyde-3-phosphate dehydrogenase A, chloroplastic (233 aa).

Residues 49–51 (SCT), threonine 80, arginine 95, 108–109 (TG), and arginine 131 each bind D-glyceraldehyde 3-phosphate. Cysteine 50 (nucleophile) is an active-site residue. Asparagine 213 provides a ligand contact to NADP(+).

This sequence belongs to the glyceraldehyde-3-phosphate dehydrogenase family. In terms of assembly, tetramer of either four A chains (GAPDH 2) or two A and two B chains (GAPDH 1).

Its subcellular location is the plastid. It localises to the chloroplast. The catalysed reaction is D-glyceraldehyde 3-phosphate + phosphate + NADP(+) = (2R)-3-phospho-glyceroyl phosphate + NADPH + H(+). It participates in carbohydrate biosynthesis; Calvin cycle. This Sinapis alba (White mustard) protein is Glyceraldehyde-3-phosphate dehydrogenase A, chloroplastic (GAPA).